We begin with the raw amino-acid sequence, 110 residues long: Large ribosomal subunit protein uL22 (110 aa).

Belongs to the universal ribosomal protein uL22 family. Part of the 50S ribosomal subunit.

Functionally, this protein binds specifically to 23S rRNA; its binding is stimulated by other ribosomal proteins, e.g. L4, L17, and L20. It is important during the early stages of 50S assembly. It makes multiple contacts with different domains of the 23S rRNA in the assembled 50S subunit and ribosome. In terms of biological role, the globular domain of the protein is located near the polypeptide exit tunnel on the outside of the subunit, while an extended beta-hairpin is found that lines the wall of the exit tunnel in the center of the 70S ribosome. The protein is Large ribosomal subunit protein uL22 of Acinetobacter baylyi (strain ATCC 33305 / BD413 / ADP1).